Here is a 534-residue protein sequence, read N- to C-terminus: High-affinity nicotinic acid transporter (534 aa).

The Extracellular segment spans residues 1 to 130 (MSNKFTMESP…DIHLVGTQYN (130 aa)). Residues 21-56 (SPTNDGSEEKPTEVTFQEDEGHDASLHNRSHDKKSE) form a disordered region. A Phosphoserine modification is found at S27. Residues 131-151 (TCVTVFFATYVLFDPIGTNLL) form a helical membrane-spanning segment. Position 152 (K152) is a topological domain, cytoplasmic. The helical transmembrane segment at 153–173 (IMGPPLMMSICLTCFGAISLG) threads the bilayer. The Extracellular segment spans residues 174–187 (TAWVKNYAQLIVVR). Residues 188-208 (LLLGAFEGMIYPAINMYLSVC) form a helical membrane-spanning segment. Over 209–217 (YRREQYALR) the chain is Cytoplasmic. Residues 218-238 (FAFVFSAACLSSSFGGLIAYG) form a helical membrane-spanning segment. The Extracellular portion of the chain corresponds to 239–250 (CSKISGSLKDWQ). A helical membrane pass occupies residues 251-271 (YIYIVEGCISLGFVPFYAFGL). Residues 272–323 (SKNLEDSWFFNKEEKEYISERYKTMNTFDPDEKFEWFQVWQAVKDVKTWASA) are Cytoplasmic-facing. Residue K283 forms a Glycyl lysine isopeptide (Lys-Gly) (interchain with G-Cter in ubiquitin) linkage. A helical membrane pass occupies residues 324–344 (VALFGIDLTTFGLTVFLPIII). The Extracellular segment spans residues 345–355 (TSMGFTNVRAQ). Residues 356 to 376 (LMTVPIYFLTAIVFFICAVWS) form a helical membrane-spanning segment. At 377 to 384 (DRIKLRSP) the chain is on the cytoplasmic side. Residues 385-405 (FILGACLTTSIGIAIVLGSQV) traverse the membrane as a helical segment. Over 406-410 (HGVRY) the chain is Extracellular. The chain crosses the membrane as a helical span at residues 411–431 (FGVYILCMGIYVNAACNCLWL). At 432–444 (SGNTGNYFKRATA) the chain is on the cytoplasmic side. A helical transmembrane segment spans residues 445–465 (LGINLFFGSGSGLVSGQIFVA). Residues 466-474 (KDKPRYIKG) are Extracellular-facing. A helical membrane pass occupies residues 475 to 495 (LSISLAFQVFSIFMTVVQIFL). The Cytoplasmic portion of the chain corresponds to 496–534 (YKRENDKKKAIIDRCNELGEPIPYDERLSDKNPEFKYMY).

Belongs to the major facilitator superfamily. Allantoate permease family.

It is found in the membrane. In terms of biological role, involved in the uptake of nicotinic acid. The chain is High-affinity nicotinic acid transporter (TNA1) from Saccharomyces cerevisiae (strain ATCC 204508 / S288c) (Baker's yeast).